We begin with the raw amino-acid sequence, 122 residues long: Semaphorin-like protein A43 (122 aa).

The Sema domain occupies 1-122 (MIYLYTADNV…RIMYLFYEYH (122 aa)).

It belongs to the semaphorin family.

In Homo sapiens (Human), this protein is Semaphorin-like protein A43 (A43R).